Consider the following 358-residue polypeptide: Nuclease EXOG, mitochondrial (358 aa).

Catalysis depends on H132, which acts as the Proton acceptor. Position 163 (N163) interacts with a divalent metal cation.

Belongs to the DNA/RNA non-specific endonuclease family. Homodimer. It depends on a divalent metal cation as a cofactor.

It is found in the mitochondrion inner membrane. Functionally, endo/exonuclease with nicking activity towards supercoiled DNA, a preference for single-stranded DNA and 5'-3' exonuclease activity. The polypeptide is Nuclease EXOG, mitochondrial (exog) (Xenopus laevis (African clawed frog)).